Reading from the N-terminus, the 666-residue chain is Translation factor guf1, mitochondrial (666 aa).

The N-terminal 44 residues, 1–44 (MRGCLQLGRWLSAAPRCQAASLRPPTVFPSYRYNRSFSTTTIYY), are a transit peptide targeting the mitochondrion. The region spanning 68-248 (ERFRNFCIVA…TVVEKVPAPI (181 aa)) is the tr-type G domain. Residues 77–84 (AHVDHGKS), 141–145 (DTPGH), and 195–198 (NKVD) each bind GTP.

This sequence belongs to the TRAFAC class translation factor GTPase superfamily. Classic translation factor GTPase family. LepA subfamily.

Its subcellular location is the mitochondrion inner membrane. It catalyses the reaction GTP + H2O = GDP + phosphate + H(+). Promotes mitochondrial protein synthesis. May act as a fidelity factor of the translation reaction, by catalyzing a one-codon backward translocation of tRNAs on improperly translocated ribosomes. Binds to mitochondrial ribosomes in a GTP-dependent manner. This Penicillium rubens (strain ATCC 28089 / DSM 1075 / NRRL 1951 / Wisconsin 54-1255) (Penicillium chrysogenum) protein is Translation factor guf1, mitochondrial (guf1).